The sequence spans 231 residues: 5'-methylthioadenosine/S-adenosylhomocysteine nucleosidase (231 aa).

Glutamate 12 serves as the catalytic Proton acceptor. Residues glycine 78, methionine 153, and methionine 174 to glutamate 175 contribute to the substrate site. Aspartate 198 acts as the Proton donor in catalysis.

The protein belongs to the PNP/UDP phosphorylase family. MtnN subfamily.

The enzyme catalyses S-adenosyl-L-homocysteine + H2O = S-(5-deoxy-D-ribos-5-yl)-L-homocysteine + adenine. It carries out the reaction S-methyl-5'-thioadenosine + H2O = 5-(methylsulfanyl)-D-ribose + adenine. The catalysed reaction is 5'-deoxyadenosine + H2O = 5-deoxy-D-ribose + adenine. The protein operates within amino-acid biosynthesis; L-methionine biosynthesis via salvage pathway; S-methyl-5-thio-alpha-D-ribose 1-phosphate from S-methyl-5'-thioadenosine (hydrolase route): step 1/2. Its function is as follows. Catalyzes the irreversible cleavage of the glycosidic bond in both 5'-methylthioadenosine (MTA) and S-adenosylhomocysteine (SAH/AdoHcy) to adenine and the corresponding thioribose, 5'-methylthioribose and S-ribosylhomocysteine, respectively. Also cleaves 5'-deoxyadenosine, a toxic by-product of radical S-adenosylmethionine (SAM) enzymes, into 5-deoxyribose and adenine. The chain is 5'-methylthioadenosine/S-adenosylhomocysteine nucleosidase from Bacillus velezensis (strain DSM 23117 / BGSC 10A6 / LMG 26770 / FZB42) (Bacillus amyloliquefaciens subsp. plantarum).